Consider the following 213-residue polypeptide: MLIIILLLIASYLLGAIPFGLWIGKIFFKKNLHDYGSGNTGTTNTFRILGVKAGIAVFIFDLLKGTLATLLPLIFHINGVSPLIFGLLAVIGHTLSIFDHFKGGKAVATSAGVVLGFSPFFLLYLLVIFILVLWLFSMISLSSVVAAIFALLGILIFPSFGFILTSYDLLFSIIIFALAIIIIFRHKTNLKRIKNHCESLVPFGLNLSRQKEK.

6 helical membrane-spanning segments follow: residues 3–23 (IIIL…GLWI), 48–68 (ILGV…GTLA), 71–91 (LPLI…LAVI), 119–139 (PFFL…FSMI), 144–164 (VVAA…GFIL), and 165–185 (TSYD…IIFR).

This sequence belongs to the PlsY family. In terms of assembly, probably interacts with PlsX.

It localises to the cell membrane. It catalyses the reaction an acyl phosphate + sn-glycerol 3-phosphate = a 1-acyl-sn-glycero-3-phosphate + phosphate. It participates in lipid metabolism; phospholipid metabolism. In terms of biological role, catalyzes the transfer of an acyl group from acyl-phosphate (acyl-PO(4)) to glycerol-3-phosphate (G3P) to form lysophosphatidic acid (LPA). This enzyme utilizes acyl-phosphate as fatty acyl donor, but not acyl-CoA or acyl-ACP. In Lactococcus lactis subsp. cremoris (strain MG1363), this protein is Glycerol-3-phosphate acyltransferase.